A 424-amino-acid chain; its full sequence is Serine hydroxymethyltransferase (424 aa).

Residues Leu113 and 117–119 each bind (6S)-5,6,7,8-tetrahydrofolate; that span reads GHL. N6-(pyridoxal phosphate)lysine is present on Lys222. (6S)-5,6,7,8-tetrahydrofolate is bound at residue 361 to 363; it reads SPF.

Belongs to the SHMT family. As to quaternary structure, homodimer. Pyridoxal 5'-phosphate serves as cofactor.

It is found in the cytoplasm. The catalysed reaction is (6R)-5,10-methylene-5,6,7,8-tetrahydrofolate + glycine + H2O = (6S)-5,6,7,8-tetrahydrofolate + L-serine. It participates in one-carbon metabolism; tetrahydrofolate interconversion. The protein operates within amino-acid biosynthesis; glycine biosynthesis; glycine from L-serine: step 1/1. Functionally, catalyzes the reversible interconversion of serine and glycine with tetrahydrofolate (THF) serving as the one-carbon carrier. This reaction serves as the major source of one-carbon groups required for the biosynthesis of purines, thymidylate, methionine, and other important biomolecules. Also exhibits THF-independent aldolase activity toward beta-hydroxyamino acids, producing glycine and aldehydes, via a retro-aldol mechanism. This is Serine hydroxymethyltransferase from Flavobacterium johnsoniae (strain ATCC 17061 / DSM 2064 / JCM 8514 / BCRC 14874 / CCUG 350202 / NBRC 14942 / NCIMB 11054 / UW101) (Cytophaga johnsonae).